Here is a 400-residue protein sequence, read N- to C-terminus: Probable transposase for insertion sequence element ISRM3-like (400 aa).

The protein belongs to the transposase mutator family.

Functionally, required for the transposition of the insertion element. This is Probable transposase for insertion sequence element ISRM3-like from Sinorhizobium fredii (strain NBRC 101917 / NGR234).